We begin with the raw amino-acid sequence, 230 residues long: D-glycero-alpha-D-manno-heptose 1-phosphate guanylyltransferase (230 aa).

It belongs to the D-alpha-D-heptose-1-P guanylyltransferase family.

The enzyme catalyses D-glycero-alpha-D-manno-heptose 1-phosphate + GTP + H(+) = GDP-D-glycero-alpha-D-manno-heptose + diphosphate. Its pathway is nucleotide-sugar biosynthesis; GDP-D-glycero-alpha-D-manno-heptose biosynthesis; GDP-D-glycero-alpha-D-manno-heptose from D-glycero-alpha-D-manno-heptose 7-phosphate: step 3/3. The protein operates within cell surface structure biogenesis; S-layer biogenesis. Functionally, catalyzes the GDP transfer from GTP to D-glycero-alpha-D-manno-heptose 1-phosphate, yielding GDP-D-alpha-D-heptose. Cannot use ATP, CTP, dTTP or UTP as substrate. This Aneurinibacillus thermoaerophilus protein is D-glycero-alpha-D-manno-heptose 1-phosphate guanylyltransferase (hddC).